The primary structure comprises 521 residues: Ribonuclease Y (521 aa).

The chain crosses the membrane as a helical span at residues 5–25 (MMTMILAVIAAAIGFLIGNLL). The KH domain occupies 211–271 (TVSVVALPSD…VRREVAKLSL (61 aa)). One can recognise an HD domain in the interval 337 to 430 (VYQHSLEVAF…VQAADALSGA (94 aa)).

It belongs to the RNase Y family.

The protein localises to the cell membrane. In terms of biological role, endoribonuclease that initiates mRNA decay. This is Ribonuclease Y from Geotalea uraniireducens (strain Rf4) (Geobacter uraniireducens).